The primary structure comprises 248 residues: Meiotic drive suppressor wtf1 (248 aa).

The disordered stretch occupies residues 30-68; the sequence is LLPEYNSDEESTLPPYSDHARVSNPPNTHRENHSSGTTD. Helical transmembrane passes span 73 to 93, 110 to 130, 152 to 172, and 186 to 206; these read FLIK…PAVC, WTLI…SWYF, IPMA…PRVT, and SLAD…VETV.

It belongs to the WTF family. In terms of assembly, homomer. Interacts with other proteins that exhibit high sequence similarity.

It is found in the spore membrane. Its subcellular location is the vacuole membrane. Its function is as follows. Acts as a suppressor component of the dual wtf meiotic drive system, and can suppress but not confer meiotic drive by compatible poisons. Wtf meiotic drive systems promote unequal transmission of alleles from the parental zygote to progeny spores by encoding a poison and an antidote from the same locus; the poison is trans-acting and forms toxic aggregates in all spores within an ascus, wherease the antidote is spore-specific and targets aggregates for degradation by the vacuole. Meiotic drive by wtf systems therefore lead to poisoning of all progeny that do not inherit the dual poison/antidote allele, or express a compatible antidote. The sequence is that of Meiotic drive suppressor wtf1 from Schizosaccharomyces pombe (Fission yeast).